The following is a 142-amino-acid chain: Nucleoside diphosphate kinase (142 aa).

Lysine 11, phenylalanine 59, arginine 87, threonine 93, arginine 104, and asparagine 114 together coordinate ATP. Catalysis depends on histidine 117, which acts as the Pros-phosphohistidine intermediate.

The protein belongs to the NDK family. As to quaternary structure, homotetramer. The cofactor is Mg(2+).

It localises to the cytoplasm. The enzyme catalyses a 2'-deoxyribonucleoside 5'-diphosphate + ATP = a 2'-deoxyribonucleoside 5'-triphosphate + ADP. It catalyses the reaction a ribonucleoside 5'-diphosphate + ATP = a ribonucleoside 5'-triphosphate + ADP. Its function is as follows. Major role in the synthesis of nucleoside triphosphates other than ATP. The ATP gamma phosphate is transferred to the NDP beta phosphate via a ping-pong mechanism, using a phosphorylated active-site intermediate. This is Nucleoside diphosphate kinase from Yersinia pseudotuberculosis serotype I (strain IP32953).